A 246-amino-acid polypeptide reads, in one-letter code: 2,5-diamino-6-ribosylamino-4(3H)-pyrimidinone 5'-phosphate reductase (246 aa).

NADP(+) contacts are provided by residues threonine 78, aspartate 82, leucine 163, and 186–190; that span reads GAEVL.

The protein belongs to the HTP reductase family. Homodimer.

The enzyme catalyses 2,5-diamino-6-(1-D-ribitylamino)pyrimidin-4(3H)-one 5'-phosphate + NADP(+) = 2,5-diamino-6-(1-D-ribosylamino)pyrimidin-4(3H)-one 5'-phosphate + NADPH + H(+). It carries out the reaction 2,5-diamino-6-(1-D-ribitylamino)pyrimidin-4(3H)-one 5'-phosphate + NAD(+) = 2,5-diamino-6-(1-D-ribosylamino)pyrimidin-4(3H)-one 5'-phosphate + NADH + H(+). The protein operates within cofactor biosynthesis; riboflavin biosynthesis. Functionally, catalyzes an early step in riboflavin biosynthesis, the NADPH-dependent reduction of the ribose side chain of 2,5-diamino-6-ribosylamino-4(3H)-pyrimidinone 5'-phosphate, yielding 2,5-diamino-6-ribitylamino-4(3H)-pyrimidinone 5'-phosphate. The polypeptide is 2,5-diamino-6-ribosylamino-4(3H)-pyrimidinone 5'-phosphate reductase (RIB7) (Eremothecium gossypii (strain ATCC 10895 / CBS 109.51 / FGSC 9923 / NRRL Y-1056) (Yeast)).